We begin with the raw amino-acid sequence, 370 residues long: Coiled-coil domain-containing protein 89 (370 aa).

A disordered region spans residues 1–21 (MPQEEKTLRMDTPPPDEILGK). Position 12 is a phosphothreonine (T12). Residues 36-346 (KEMDGLREAL…YDELRLQSEA (311 aa)) are a coiled coil.

Belongs to the CCDC89 family. In terms of assembly, interacts with HEY1. As to expression, expression is restricted to the adult testis, where localization is almost exclusive to round spermatids.

The protein resides in the cytoplasm. The protein localises to the nucleus. The sequence is that of Coiled-coil domain-containing protein 89 from Mus musculus (Mouse).